The chain runs to 524 residues: MCAIAYLGGLLTGIVIAIIASIIASVISYRKGIEFRKKKAEAKIGSAEQEAERIISEAQKIAEAKKREVLLEAKEEIHKSRLELDREIKERRNEIQRLERRLVQKEEALDRKVESLEQKEELLNKKTKEIQELYEQTLETQRQQVAELERISGLSVDEAKEVLLKNVENEVKHEMAILIKDIEAKAKEEAEIRAKNIIAMAIQKCAADHVSEVTVSVVPLPNDEMKGRIIGREGRNIRTLETLTGIDLIIDDTPEAVILSGFDPIRREIARITLEKLILDGRIHPARIEEMVEKARKEVENTIRQEGENATFETGVHGLHPEIVRLLGKLKFRTSYGQNVLSHSIEVARLAGLMAAELGVDVNLAKRAGLLHDIGKAVDHEVEGSHVTIGADIAKKYKESNEVVNAIASHHGDVEATSIIAVLVQAADSISAARPGARRETLESYIKRLEKLEEIANSFDGVDKCFAIQAGREIRIMVKPEDVSDSDIALIARDIVKRIENELDYPGQIKVNVIRETRYIEYAK.

The chain crosses the membrane as a helical span at residues 7 to 27; it reads LGGLLTGIVIAIIASIIASVI. Positions 214 to 299 constitute a KH domain; that stretch reads TVSVVPLPND…EMVEKARKEV (86 aa). Residues 340–433 form the HD domain; it reads VLSHSIEVAR…VQAADSISAA (94 aa).

It belongs to the RNase Y family.

Its subcellular location is the cell membrane. In terms of biological role, endoribonuclease that initiates mRNA decay. This Acetivibrio thermocellus (strain ATCC 27405 / DSM 1237 / JCM 9322 / NBRC 103400 / NCIMB 10682 / NRRL B-4536 / VPI 7372) (Clostridium thermocellum) protein is Ribonuclease Y.